We begin with the raw amino-acid sequence, 331 residues long: Ribosomal RNA small subunit methyltransferase H (331 aa).

S-adenosyl-L-methionine contacts are provided by residues 38–40 (GGY), aspartate 56, phenylalanine 83, aspartate 100, and glutamine 107. The tract at residues 287-331 (DEAELAENPRARSARLRVGVRTDAPAGKVDPQALGTPLIPKKGRR) is disordered.

This sequence belongs to the methyltransferase superfamily. RsmH family.

Its subcellular location is the cytoplasm. It catalyses the reaction cytidine(1402) in 16S rRNA + S-adenosyl-L-methionine = N(4)-methylcytidine(1402) in 16S rRNA + S-adenosyl-L-homocysteine + H(+). Its function is as follows. Specifically methylates the N4 position of cytidine in position 1402 (C1402) of 16S rRNA. This is Ribosomal RNA small subunit methyltransferase H from Cereibacter sphaeroides (strain ATCC 17023 / DSM 158 / JCM 6121 / CCUG 31486 / LMG 2827 / NBRC 12203 / NCIMB 8253 / ATH 2.4.1.) (Rhodobacter sphaeroides).